A 128-amino-acid chain; its full sequence is Large ribosomal subunit protein bL21 (128 aa).

Positions 104 to 128 are disordered; it reads GKTPTVGPRPKKEKVVEPAEGEGDH. Residues 116–128 show a composition bias toward basic and acidic residues; the sequence is EKVVEPAEGEGDH.

Belongs to the bacterial ribosomal protein bL21 family. In terms of assembly, part of the 50S ribosomal subunit. Contacts protein L20.

In terms of biological role, this protein binds to 23S rRNA in the presence of protein L20. The chain is Large ribosomal subunit protein bL21 from Nitrobacter hamburgensis (strain DSM 10229 / NCIMB 13809 / X14).